The chain runs to 515 residues: BURP domain-containing protein 9 (515 aa).

Positions 1-29 (MKATGGPLPLILFLLIIIVLITAQHTAIA) are cleaved as a signal peptide. One can recognise a BURP domain in the interval 292–507 (YFFEDNLAPG…GRGSIIWVPV (216 aa)). N-linked (GlcNAc...) asparagine glycosylation is found at asparagine 321, asparagine 332, and asparagine 470.

As to expression, expressed in shoot and panicles.

The protein is BURP domain-containing protein 9 (BURP9) of Oryza sativa subsp. japonica (Rice).